The sequence spans 115 residues: Arsenic resistance transcriptional regulator ArsR2 (115 aa).

Residues 1-90 form the HTH arsR-type domain; that stretch reads MITPPDVFKS…EMLQVTLQAN (90 aa). The arsenite site is built by C30 and C32. The H-T-H motif DNA-binding region spans 31-54; sequence VCELMCALNDSQPKISRHLAQLRS.

Homodimer.

The protein localises to the cytoplasm. In terms of biological role, binds arsenite and regulates the expression of arsenic efflux pumps. In vitro, also binds antimony and bismuth, but not arsenate. The sequence is that of Arsenic resistance transcriptional regulator ArsR2 from Pseudomonas putida (strain ATCC 47054 / DSM 6125 / CFBP 8728 / NCIMB 11950 / KT2440).